We begin with the raw amino-acid sequence, 273 residues long: SKA complex subunit 1 homolog (273 aa).

Residues 77–97 (KKLVQRSLKEEEKLQHMLANL) are a coiled coil.

Belongs to the SKA1 family.

The polypeptide is SKA complex subunit 1 homolog (Zea mays (Maize)).